Consider the following 314-residue polypeptide: tRNA uridine(34) hydroxylase (314 aa).

In terms of domain architecture, Rhodanese spans 140-234 (ARDDVILIDT…YLEETPPDES (95 aa)). The active-site Cysteine persulfide intermediate is Cys194.

This sequence belongs to the TrhO family.

The enzyme catalyses uridine(34) in tRNA + AH2 + O2 = 5-hydroxyuridine(34) in tRNA + A + H2O. Its function is as follows. Catalyzes oxygen-dependent 5-hydroxyuridine (ho5U) modification at position 34 in tRNAs. The sequence is that of tRNA uridine(34) hydroxylase from Acinetobacter baumannii (strain SDF).